The chain runs to 203 residues: Ras-like protein 1 (203 aa).

GTP is bound at residue 17–24; it reads GGGGVGKS. An Effector region motif is present at residues 39–47; that stretch reads YDPTIEDSY. GTP-binding positions include 64 to 68 and 123 to 126; these read DTAGQ and NKCD. Residue Cys-200 is modified to Cysteine methyl ester. Cys-200 carries S-farnesyl cysteine lipidation. The propeptide at 201-203 is removed in mature form; it reads ILM.

Belongs to the small GTPase superfamily. Ras family.

Its subcellular location is the cell membrane. The catalysed reaction is GTP + H2O = GDP + phosphate + H(+). Alternates between an inactive form bound to GDP and an active form bound to GTP. Activated by a guanine nucleotide-exchange factor (GEF) and inactivated by a GTPase-activating protein (GAP). The polypeptide is Ras-like protein 1 (RAS1) (Mucor circinelloides f. lusitanicus (Mucor racemosus var. lusitanicus)).